The primary structure comprises 1022 residues: Histone-lysine N-methyltransferase TRX1 (1022 aa).

A disordered region spans residues 31-151 (SSAPCPLPKK…QRQGVHKEAA (121 aa)). Over residues 65 to 78 (EGPPPSPATAPPML) the composition is skewed to pro residues. Residues 127 to 139 (GGAERRGYFSEPK) show a composition bias toward basic and acidic residues. A PWWP domain is found at 264-327 (PGDLVWAKLT…LKQAVPFLNG (64 aa)). Residues 367–393 (SMEKGSSDANSNKDVHSCDNLSEDKTA) are compositionally biased toward basic and acidic residues. Positions 367-399 (SMEKGSSDANSNKDVHSCDNLSEDKTAESGGDY) are disordered. Residues 402-461 (MTPIELGNLRVSKLGRIVTDSDYFHNKKHIWPEGYTAFRKFRSVKDPHVVILYKMEVLRN) form the FYR N-terminal domain. Residues 465 to 548 (KARPLFRVTS…SCLKYFENAG (84 aa)) enclose the FYR C-terminal domain. Residues 553–609 (GYRAVHVNWKDLDYCSVCDMDEEYEDNLFLQCDKCRMMVHARCYGELEPLNGVLWLC) form a Phorbol-ester/DAG-type zinc finger. 2 consecutive PHD-type zinc fingers follow at residues 564–615 (LDYC…CRPE) and 677–744 (LLCS…KKHR). The interval 620-744 (SPRCCLCPVT…RLLSYCKKHR (125 aa)) is extended PHD domain (ePHD). Residues 861 to 979 (RRLAFGKSRI…PWEELTYDYR (119 aa)) form the SET domain. Residue cysteine 943 participates in Zn(2+) binding. Tyrosine 978 is a binding site for S-adenosyl-L-methionine. The region spanning 985–1001 (QRLPCYCGFPKCRGVVN) is the Post-SET domain. Zn(2+) contacts are provided by cysteine 989, cysteine 991, and cysteine 996.

This sequence belongs to the class V-like SAM-binding methyltransferase superfamily. Histone-lysine methyltransferase family. TRX/MLL subfamily. In terms of assembly, interacts with EHD3. In terms of tissue distribution, expressed in leaf blades and panicles.

The protein resides in the nucleus. The enzyme catalyses L-lysyl(4)-[histone H3] + S-adenosyl-L-methionine = N(6)-methyl-L-lysyl(4)-[histone H3] + S-adenosyl-L-homocysteine + H(+). In terms of biological role, possesses histone H3 methyltransferase activity in vitro. Methylates 'Lys-4' of histone H3. H3 'Lys-4' methylation represents a specific tag for epigenetic transcriptional activation. Functions as a receptor for the lipid messenger phosphatidylinositol 5-phosphate (PI5P), which negatively regulates its transcriptional activation activity. Involved in the regulation of flowering time and floral induction under long day (LD) conditions. Acts as an activator of flowering under LD conditions. May function through binding to EHD3, a repressor of GHD7. The protein is Histone-lysine N-methyltransferase TRX1 of Oryza sativa subsp. japonica (Rice).